The sequence spans 116 residues: Translation initiation factor 1A (116 aa).

The interval 1-25 (MRCLSKKHQKQGDEHGGEIPLPNPD) is disordered. The 75-residue stretch at 17 to 91 (GEIPLPNPDE…EKGEVVYKYG (75 aa)) folds into the S1-like domain.

It belongs to the eIF-1A family.

Functionally, seems to be required for maximal rate of protein biosynthesis. Enhances ribosome dissociation into subunits and stabilizes the binding of the initiator Met-tRNA(I) to 40 S ribosomal subunits. In Desulfurococcus amylolyticus (strain DSM 18924 / JCM 16383 / VKM B-2413 / 1221n) (Desulfurococcus kamchatkensis), this protein is Translation initiation factor 1A (eIF1A).